The primary structure comprises 478 residues: Transposase for insertion sequence element IS231C (478 aa).

This sequence belongs to the transposase 11 family.

Functionally, involved in the transposition of the insertion sequence. In Bacillus thuringiensis subsp. berliner, this protein is Transposase for insertion sequence element IS231C.